We begin with the raw amino-acid sequence, 360 residues long: Phospho-N-acetylmuramoyl-pentapeptide-transferase (360 aa).

10 helical membrane passes run 21–41, 73–93, 94–114, 132–152, 168–188, 199–219, 236–256, 263–283, 288–308, and 338–358; these read YLSF…LWMG, TMGG…WANL, SNPY…VGFV, WKYF…YAYG, VMPQ…VGTS, GLAI…AWAT, ASEL…FLWF, VFMG…IAVL, LVLV…ILQV, and VIVR…ATLK.

It belongs to the glycosyltransferase 4 family. MraY subfamily. The cofactor is Mg(2+).

The protein resides in the cell inner membrane. It carries out the reaction UDP-N-acetyl-alpha-D-muramoyl-L-alanyl-gamma-D-glutamyl-meso-2,6-diaminopimeloyl-D-alanyl-D-alanine + di-trans,octa-cis-undecaprenyl phosphate = di-trans,octa-cis-undecaprenyl diphospho-N-acetyl-alpha-D-muramoyl-L-alanyl-D-glutamyl-meso-2,6-diaminopimeloyl-D-alanyl-D-alanine + UMP. It functions in the pathway cell wall biogenesis; peptidoglycan biosynthesis. Catalyzes the initial step of the lipid cycle reactions in the biosynthesis of the cell wall peptidoglycan: transfers peptidoglycan precursor phospho-MurNAc-pentapeptide from UDP-MurNAc-pentapeptide onto the lipid carrier undecaprenyl phosphate, yielding undecaprenyl-pyrophosphoryl-MurNAc-pentapeptide, known as lipid I. This Vibrio vulnificus (strain CMCP6) protein is Phospho-N-acetylmuramoyl-pentapeptide-transferase.